We begin with the raw amino-acid sequence, 338 residues long: D-erythrose-4-phosphate dehydrogenase (338 aa).

11–12 (RI) contacts NAD(+). Substrate contacts are provided by residues 153 to 155 (SCT), Arg-199, 212 to 213 (TK), and Arg-235. Cys-154 functions as the Nucleophile in the catalytic mechanism. Asn-317 provides a ligand contact to NAD(+).

This sequence belongs to the glyceraldehyde-3-phosphate dehydrogenase family. Epd subfamily. As to quaternary structure, homotetramer.

The protein localises to the cytoplasm. It catalyses the reaction D-erythrose 4-phosphate + NAD(+) + H2O = 4-phospho-D-erythronate + NADH + 2 H(+). It participates in cofactor biosynthesis; pyridoxine 5'-phosphate biosynthesis; pyridoxine 5'-phosphate from D-erythrose 4-phosphate: step 1/5. Catalyzes the NAD-dependent conversion of D-erythrose 4-phosphate to 4-phosphoerythronate. This Shewanella putrefaciens (strain CN-32 / ATCC BAA-453) protein is D-erythrose-4-phosphate dehydrogenase.